Reading from the N-terminus, the 1116-residue chain is Error-prone DNA polymerase 1 (1116 aa).

The protein belongs to the DNA polymerase type-C family. DnaE2 subfamily.

It is found in the cytoplasm. It catalyses the reaction DNA(n) + a 2'-deoxyribonucleoside 5'-triphosphate = DNA(n+1) + diphosphate. In terms of biological role, DNA polymerase involved in damage-induced mutagenesis and translesion synthesis (TLS). It is not the major replicative DNA polymerase. This chain is Error-prone DNA polymerase 1, found in Rhizobium meliloti (strain 1021) (Ensifer meliloti).